The sequence spans 340 residues: Phosphoribosylformylglycinamidine cyclo-ligase (340 aa).

This sequence belongs to the AIR synthase family.

It localises to the cytoplasm. It catalyses the reaction 2-formamido-N(1)-(5-O-phospho-beta-D-ribosyl)acetamidine + ATP = 5-amino-1-(5-phospho-beta-D-ribosyl)imidazole + ADP + phosphate + H(+). The protein operates within purine metabolism; IMP biosynthesis via de novo pathway; 5-amino-1-(5-phospho-D-ribosyl)imidazole from N(2)-formyl-N(1)-(5-phospho-D-ribosyl)glycinamide: step 2/2. This is Phosphoribosylformylglycinamidine cyclo-ligase from Streptococcus pyogenes serotype M6 (strain ATCC BAA-946 / MGAS10394).